A 490-amino-acid polypeptide reads, in one-letter code: Ketol-acid reductoisomerase (NADP(+)) (490 aa).

The region spanning 17-208 is the KARI N-terminal Rossmann domain; the sequence is LAQCEFMNAD…GGHRAGVLKS (192 aa). Residues 45–48, R68, R76, S78, and 108–110 contribute to the NADP(+) site; these read CGAQ and DKQ. H132 is an active-site residue. G158 lines the NADP(+) pocket. 2 KARI C-terminal knotted domains span residues 209–353 and 355–486; these read SFIA…AEQE and FDNG…MSAM. Mg(2+)-binding residues include D217, E221, E389, and E393. S414 lines the substrate pocket.

The protein belongs to the ketol-acid reductoisomerase family. Mg(2+) is required as a cofactor.

The catalysed reaction is (2R)-2,3-dihydroxy-3-methylbutanoate + NADP(+) = (2S)-2-acetolactate + NADPH + H(+). It carries out the reaction (2R,3R)-2,3-dihydroxy-3-methylpentanoate + NADP(+) = (S)-2-ethyl-2-hydroxy-3-oxobutanoate + NADPH + H(+). The protein operates within amino-acid biosynthesis; L-isoleucine biosynthesis; L-isoleucine from 2-oxobutanoate: step 2/4. Its pathway is amino-acid biosynthesis; L-valine biosynthesis; L-valine from pyruvate: step 2/4. Involved in the biosynthesis of branched-chain amino acids (BCAA). Catalyzes an alkyl-migration followed by a ketol-acid reduction of (S)-2-acetolactate (S2AL) to yield (R)-2,3-dihydroxy-isovalerate. In the isomerase reaction, S2AL is rearranged via a Mg-dependent methyl migration to produce 3-hydroxy-3-methyl-2-ketobutyrate (HMKB). In the reductase reaction, this 2-ketoacid undergoes a metal-dependent reduction by NADPH to yield (R)-2,3-dihydroxy-isovalerate. This Pseudoalteromonas translucida (strain TAC 125) protein is Ketol-acid reductoisomerase (NADP(+)).